We begin with the raw amino-acid sequence, 165 residues long: Ribosome maturation factor RimM (165 aa).

Positions 89-161 (EADTHYVVDL…KIVIKPVRQW (73 aa)) constitute a PRC barrel domain.

The protein belongs to the RimM family. As to quaternary structure, binds ribosomal protein uS19.

It is found in the cytoplasm. Its function is as follows. An accessory protein needed during the final step in the assembly of 30S ribosomal subunit, possibly for assembly of the head region. Essential for efficient processing of 16S rRNA. May be needed both before and after RbfA during the maturation of 16S rRNA. It has affinity for free ribosomal 30S subunits but not for 70S ribosomes. The polypeptide is Ribosome maturation factor RimM (Clostridium botulinum (strain Eklund 17B / Type B)).